Consider the following 309-residue polypeptide: tRNA dimethylallyltransferase (309 aa).

13-20 contributes to the ATP binding site; that stretch reads GPTAVGKS. 15–20 is a substrate binding site; it reads TAVGKS.

The protein belongs to the IPP transferase family. In terms of assembly, monomer. Requires Mg(2+) as cofactor.

It catalyses the reaction adenosine(37) in tRNA + dimethylallyl diphosphate = N(6)-dimethylallyladenosine(37) in tRNA + diphosphate. In terms of biological role, catalyzes the transfer of a dimethylallyl group onto the adenine at position 37 in tRNAs that read codons beginning with uridine, leading to the formation of N6-(dimethylallyl)adenosine (i(6)A). This Lacticaseibacillus paracasei (strain ATCC 334 / BCRC 17002 / CCUG 31169 / CIP 107868 / KCTC 3260 / NRRL B-441) (Lactobacillus paracasei) protein is tRNA dimethylallyltransferase.